Reading from the N-terminus, the 314-residue chain is Methionyl-tRNA formyltransferase (314 aa).

A (6S)-5,6,7,8-tetrahydrofolate-binding site is contributed by 110–113 (SLLP).

The protein belongs to the Fmt family.

It catalyses the reaction L-methionyl-tRNA(fMet) + (6R)-10-formyltetrahydrofolate = N-formyl-L-methionyl-tRNA(fMet) + (6S)-5,6,7,8-tetrahydrofolate + H(+). Attaches a formyl group to the free amino group of methionyl-tRNA(fMet). The formyl group appears to play a dual role in the initiator identity of N-formylmethionyl-tRNA by promoting its recognition by IF2 and preventing the misappropriation of this tRNA by the elongation apparatus. The chain is Methionyl-tRNA formyltransferase from Bacillus cereus (strain ATCC 14579 / DSM 31 / CCUG 7414 / JCM 2152 / NBRC 15305 / NCIMB 9373 / NCTC 2599 / NRRL B-3711).